Consider the following 59-residue polypeptide: Bdellastasin (59 aa).

5 cysteine pairs are disulfide-bonded: Cys-10/Cys-21, Cys-15/Cys-26, Cys-28/Cys-48, Cys-33/Cys-52, and Cys-37/Cys-54. Residues 28–54 form the Antistasin-like domain; sequence CSDLHCKVKCEHGFKKDDNGCEYACIC.

Its subcellular location is the secreted. Its function is as follows. Strong inhibitor of mammalian trypsin, plasmin and acrosin. The chain is Bdellastasin from Hirudo medicinalis (Medicinal leech).